The primary structure comprises 101 residues: Small ribosomal subunit protein uS14 (101 aa).

A disordered region spans residues 52–72 (PRDSSPVRQRRRCRSTGRPRG). A compositionally biased stretch (basic residues) spans 59–72 (RQRRRCRSTGRPRG).

The protein belongs to the universal ribosomal protein uS14 family. Part of the 30S ribosomal subunit. Contacts proteins S3 and S10.

Functionally, binds 16S rRNA, required for the assembly of 30S particles and may also be responsible for determining the conformation of the 16S rRNA at the A site. In Nitrosococcus oceani (strain ATCC 19707 / BCRC 17464 / JCM 30415 / NCIMB 11848 / C-107), this protein is Small ribosomal subunit protein uS14.